Here is a 120-residue protein sequence, read N- to C-terminus: MARVKRGVVARARHKKVLKQAKGYYGARSRVYRVAFQAVTKAGQYAYRDRRAKKRTFRQLWIARINAASRQNGLSYSRFISGLKKTSVEIDRKILADIAVYDQVAFAALVEKAKEGLAAA.

The protein belongs to the bacterial ribosomal protein bL20 family.

Functionally, binds directly to 23S ribosomal RNA and is necessary for the in vitro assembly process of the 50S ribosomal subunit. It is not involved in the protein synthesizing functions of that subunit. This chain is Large ribosomal subunit protein bL20, found in Pseudoalteromonas translucida (strain TAC 125).